Here is a 942-residue protein sequence, read N- to C-terminus: Protein NLP1 (942 aa).

Residues 1-11 (MEQKPSPPPPP) are compositionally biased toward pro residues. Disordered regions lie at residues 1 to 32 (MEQKPSPPPPPRSDEEEDGLMGCGMGGTGDIA), 77 to 106 (TTPAPAAGEDDRDEAEMPSRGGGGLEVSPA), 594 to 620 (VKENTCSSDPSNSNSDKAVEKRRTKTE), 723 to 753 (FQLEPSVPDRPCEGRFTSHTSGSNSISPSCS), and 759 to 778 (SLGCSSVPKTQQQHGSAPQL). Gly residues predominate over residues 21–32 (MGCGMGGTGDIA). Polar residues predominate over residues 597-609 (NTCSSDPSNSNSD). Residues 609–690 (DKAVEKRRTK…IDSVHGPEGT (82 aa)) form the RWP-RK domain. Residues 743–753 (SGSNSISPSCS) show a composition bias toward low complexity. The span at 765–774 (VPKTQQQHGS) shows a compositional bias: polar residues. The region spanning 844 to 927 (SLKIKAIYGE…QTVRILVNPS (84 aa)) is the PB1 domain.

The protein localises to the nucleus. Its function is as follows. Probable transcription factor. This chain is Protein NLP1 (NLP1), found in Oryza sativa subsp. japonica (Rice).